The chain runs to 714 residues: Protein ESC8 (714 aa).

Disordered stretches follow at residues 598-674 (APTG…ELHN) and 694-714 (RQLQDNSREKRSLRRNARKGL). The segment covering 610-624 (TSSQRRTTVHYSSDV) has biased composition (polar residues). The span at 628–650 (VSEESENEVDIDVSDDYDSEYLS) shows a compositional bias: acidic residues. A compositionally biased stretch (basic and acidic residues) spans 654–674 (TLTRKGEDRTDKSFGKRELHN). A compositionally biased stretch (basic residues) spans 704-714 (RSLRRNARKGL).

As to quaternary structure, interacts with GAL11 and SIR2.

It localises to the cytoplasm. Its subcellular location is the nucleus. Involved in HMR and telomere silencing via the recruitment or stabilizing of the SIR (silent information regulators) complex. The polypeptide is Protein ESC8 (ESC8) (Saccharomyces cerevisiae (strain ATCC 204508 / S288c) (Baker's yeast)).